Consider the following 691-residue polypeptide: DNA ligase (691 aa).

Residues Asp-36 to Asp-40, Ser-85 to Leu-86, and Glu-118 each bind NAD(+). The N6-AMP-lysine intermediate role is filled by Lys-120. NAD(+)-binding residues include Arg-141, Glu-178, Lys-295, and Lys-319. Positions 413, 416, 431, and 437 each coordinate Zn(2+). The BRCT domain maps to Gly-595–Pro-684.

Belongs to the NAD-dependent DNA ligase family. LigA subfamily. Mg(2+) is required as a cofactor. It depends on Mn(2+) as a cofactor.

It catalyses the reaction NAD(+) + (deoxyribonucleotide)n-3'-hydroxyl + 5'-phospho-(deoxyribonucleotide)m = (deoxyribonucleotide)n+m + AMP + beta-nicotinamide D-nucleotide.. In terms of biological role, DNA ligase that catalyzes the formation of phosphodiester linkages between 5'-phosphoryl and 3'-hydroxyl groups in double-stranded DNA using NAD as a coenzyme and as the energy source for the reaction. It is essential for DNA replication and repair of damaged DNA. The protein is DNA ligase of Chromohalobacter salexigens (strain ATCC BAA-138 / DSM 3043 / CIP 106854 / NCIMB 13768 / 1H11).